Reading from the N-terminus, the 355-residue chain is MTQESNSNFFNFLLFGFVTAIAFYSGTQFNKSSEQEEHINHANLYSVKKFDDGAKEYSIMLITDLDHDSKDGKKWKSLVSRGFLKVSADHKHADIHFDKDSEYYVDTNIAAGGRAMELSDLAVFNGKLYSIDDRTGLIYQISDKKALPWVLLNDGPGNVVKGFKGEWITVKDTELIVGGLGKEWTTTDGVYVNDHPMWVKHVSAHGAVHHENWKDVYIRVRRAAGIEYPGYMIHEAVQWSAIHRKWFFLPRRMSNEKYSEAEDENRGTNVLVIGNEELTDFEVVRVGSENNKSRGFAAFQFVPNTHHQLIVAIKSEEKDGKPVASYASVFDIHGNVILDEYLLHGPYKYEGIAFA.

Residues 1–6 (MTQESN) lie on the Cytoplasmic side of the membrane. Residues 7–29 (SNFFNFLLFGFVTAIAFYSGTQF) form a helical; Signal-anchor for type II membrane protein membrane-spanning segment. N-linked (GlcNAc...) asparagine glycosylation is present at Asn-30. Over 30–355 (NKSSEQEEHI…PYKYEGIAFA (326 aa)) the chain is Lumenal. Ser-119, Glu-166, and Glu-235 together coordinate Ca(2+). N-linked (GlcNAc...) asparagine glycosylation is present at Asn-291. Glu-350 contacts Ca(2+).

Belongs to the apyrase family. The cofactor is Ca(2+).

Its subcellular location is the endomembrane system. The catalysed reaction is a ribonucleoside 5'-diphosphate + H2O = a ribonucleoside 5'-phosphate + phosphate + H(+). Functionally, hydrolyzes UDP and to a lesser extent GDP. By preventing the accumulation of NDP, may promote the reglucosylation of incompletely folded glycoproteins in the endoplasmic reticulum following the unfolded protein response. This chain is Apyrase apy-1, found in Caenorhabditis elegans.